The chain runs to 232 residues: Small ribosomal subunit protein uS2 (232 aa).

It belongs to the universal ribosomal protein uS2 family.

The protein is Small ribosomal subunit protein uS2 of Heliobacterium modesticaldum (strain ATCC 51547 / Ice1).